We begin with the raw amino-acid sequence, 572 residues long: Sulfite reductase [NADPH] hemoprotein beta-component (572 aa).

Residues C436, C442, C481, and C485 each coordinate [4Fe-4S] cluster. A siroheme-binding site is contributed by C485.

This sequence belongs to the nitrite and sulfite reductase 4Fe-4S domain family. In terms of assembly, alpha(8)-beta(8). The alpha component is a flavoprotein, the beta component is a hemoprotein. Siroheme is required as a cofactor. Requires [4Fe-4S] cluster as cofactor.

The enzyme catalyses hydrogen sulfide + 3 NADP(+) + 3 H2O = sulfite + 3 NADPH + 4 H(+). It functions in the pathway sulfur metabolism; hydrogen sulfide biosynthesis; hydrogen sulfide from sulfite (NADPH route): step 1/1. Functionally, component of the sulfite reductase complex that catalyzes the 6-electron reduction of sulfite to sulfide. This is one of several activities required for the biosynthesis of L-cysteine from sulfate. The sequence is that of Sulfite reductase [NADPH] hemoprotein beta-component from Bacillus pumilus (strain SAFR-032).